A 350-amino-acid polypeptide reads, in one-letter code: Galactokinase (350 aa).

15-18 serves as a coordination point for substrate; it reads EHTD. ATP is bound by residues Ser47 and 99 to 105; that span reads GAGLSSS. Mg(2+) contacts are provided by Ser105 and Glu137. The Proton acceptor role is filled by Asp149. Residue Tyr198 participates in substrate binding.

It belongs to the GHMP kinase family. GalK subfamily.

The protein resides in the cytoplasm. The enzyme catalyses alpha-D-galactose + ATP = alpha-D-galactose 1-phosphate + ADP + H(+). Its pathway is carbohydrate metabolism; galactose metabolism. Catalyzes the transfer of the gamma-phosphate of ATP to D-galactose to form alpha-D-galactose-1-phosphate (Gal-1-P). In Pyrococcus horikoshii (strain ATCC 700860 / DSM 12428 / JCM 9974 / NBRC 100139 / OT-3), this protein is Galactokinase.